The primary structure comprises 88 residues: Putative membrane protein insertion efficiency factor (88 aa).

Belongs to the UPF0161 family.

The protein localises to the cell membrane. Could be involved in insertion of integral membrane proteins into the membrane. This is Putative membrane protein insertion efficiency factor (yrcB) from Lactococcus lactis subsp. lactis (strain IL1403) (Streptococcus lactis).